Consider the following 499-residue polypeptide: Protein adenylyltransferase Fic (499 aa).

The chain crosses the membrane as a helical span at residues 38–58 (FHYFVIFASGSLFSGLMFGLL). TPR repeat units lie at residues 126 to 159 (ALSS…SPKH) and 160 to 194 (PEIL…NPSH). Residues 251 to 256 (SVGIEG) carry the Inhibitory (S/T)XXXE(G/N) motif motif. ATP is bound by residues E255 and 337 to 340 (VGGH). Positions 306–441 (ITLKDILEIH…IRPFVRFIAD (136 aa)) constitute a Fido domain. H384 is an active-site residue. Residues 388-395 (DGNGRTSR), 420-421 (YY), and N428 contribute to the ATP site.

The protein belongs to the fic family. In terms of assembly, homodimer.

The protein resides in the membrane. The enzyme catalyses L-tyrosyl-[protein] + ATP = O-(5'-adenylyl)-L-tyrosyl-[protein] + diphosphate. It catalyses the reaction L-threonyl-[protein] + ATP = 3-O-(5'-adenylyl)-L-threonyl-[protein] + diphosphate. The catalysed reaction is 3-O-(5'-adenylyl)-L-threonyl-[protein] + H2O = L-threonyl-[protein] + AMP + H(+). With respect to regulation, the side chain of Glu-255 determines which of the two opposing activities (AMPylase or de-AMPylase) will take place. In response to endoplasmic reticulum stress, mediates de-AMPylase activity. Adenylyltransferase activity is inhibited by the inhibitory helix present at the N-terminus: Glu-255 binds ATP and competes with ATP-binding at Arg-395, thereby preventing adenylyltransferase activity. In unstressed cells, disengagement of Glu-255 promotes adenylyltransferase activity. Activation dissociates ATP-binding from Glu-255, allowing ordered binding of the entire ATP moiety with the alpha-phosphate in an orientation that is productive for accepting an incoming target hydroxyl side chain. Protein that can both mediate the addition of adenosine 5'-monophosphate (AMP) to specific residues of target proteins (AMPylation), and the removal of the same modification from target proteins (de-AMPylation), depending on the context. The side chain of Glu-255 determines which of the two opposing activities (AMPylase or de-AMPylase) will take place. Acts as a key regulator of the unfolded protein response (UPR) by mediating AMPylation or de-AMPylation of Hsc70-3/BiP. In unstressed cells, acts as an adenylyltransferase by mediating AMPylation of Hsc70-3/BiP at 'Thr-518', thereby inactivating it. In response to endoplasmic reticulum stress, acts as a phosphodiesterase by mediating removal of ATP (de-AMPylation) from Hsc70-3/BiP at 'Thr-518', leading to restore HSPA5/BiP activity. This is Protein adenylyltransferase Fic from Aedes aegypti (Yellowfever mosquito).